The sequence spans 376 residues: Cytochrome b (376 aa).

4 helical membrane passes run 28 to 48 (YGFL…FLAS), 72 to 94 (WCFR…LHIL), 107 to 127 (SWIS…VGYV), and 169 to 189 (FFVL…IHIF). The heme b site is built by histidine 78 and histidine 92. The heme b site is built by histidine 173 and histidine 187. Histidine 192 is an a ubiquinone binding site. 4 consecutive transmembrane segments (helical) span residues 214–234 (LLSL…IQSL), 274–294 (VPSK…LFLL), 317–337 (VPII…CQLP), and 340–360 (IFIL…LFVL).

Belongs to the cytochrome b family. As to quaternary structure, the main subunits of complex b-c1 are: cytochrome b, cytochrome c1 and the Rieske protein. Heme b serves as cofactor.

The protein resides in the mitochondrion inner membrane. Its function is as follows. Component of the ubiquinol-cytochrome c reductase complex (complex III or cytochrome b-c1 complex) that is part of the mitochondrial respiratory chain. The b-c1 complex mediates electron transfer from ubiquinol to cytochrome c. Contributes to the generation of a proton gradient across the mitochondrial membrane that is then used for ATP synthesis. This chain is Cytochrome b (MT-CYB), found in Plasmodium falciparum.